The following is a 283-amino-acid chain: Phosphatidylglycerol--prolipoprotein diacylglyceryl transferase (283 aa).

Transmembrane regions (helical) follow at residues Ile-21–Ala-41, Tyr-62–Tyr-82, Phe-106–Tyr-126, Leu-136–Ile-156, Pro-190–Ala-210, Gly-218–Tyr-238, and Leu-252–Tyr-272. Arg-155 provides a ligand contact to a 1,2-diacyl-sn-glycero-3-phospho-(1'-sn-glycerol).

It belongs to the Lgt family.

The protein localises to the cell inner membrane. The enzyme catalyses L-cysteinyl-[prolipoprotein] + a 1,2-diacyl-sn-glycero-3-phospho-(1'-sn-glycerol) = an S-1,2-diacyl-sn-glyceryl-L-cysteinyl-[prolipoprotein] + sn-glycerol 1-phosphate + H(+). Its pathway is protein modification; lipoprotein biosynthesis (diacylglyceryl transfer). In terms of biological role, catalyzes the transfer of the diacylglyceryl group from phosphatidylglycerol to the sulfhydryl group of the N-terminal cysteine of a prolipoprotein, the first step in the formation of mature lipoproteins. The chain is Phosphatidylglycerol--prolipoprotein diacylglyceryl transferase from Helicobacter acinonychis (strain Sheeba).